A 66-amino-acid polypeptide reads, in one-letter code: Large ribosomal subunit protein bL35 (66 aa).

Belongs to the bacterial ribosomal protein bL35 family.

The polypeptide is Large ribosomal subunit protein bL35 (Borreliella afzelii (strain PKo) (Borrelia afzelii)).